Consider the following 1002-residue polypeptide: Lon protease homolog, mitochondrial (1002 aa).

Residues 102–313 (VIALPLPHRP…LTLELVKKEM (212 aa)) form the Lon N-terminal domain. 468–475 (GPPGVGKT) contributes to the ATP binding site. Positions 811-995 (QTPVGVVMGL…NEIFDIAFQS (185 aa)) constitute a Lon proteolytic domain. Active-site residues include serine 901 and lysine 944.

Belongs to the peptidase S16 family. Homohexamer or homoheptamer. Organized in a ring with a central cavity.

Its subcellular location is the mitochondrion matrix. The enzyme catalyses Hydrolysis of proteins in presence of ATP.. Functionally, ATP-dependent serine protease that mediates the selective degradation of misfolded, unassembled or oxidatively damaged polypeptides as well as certain short-lived regulatory proteins in the mitochondrial matrix. May also have a chaperone function in the assembly of inner membrane protein complexes. Participates in the regulation of mitochondrial gene expression and in the maintenance of the integrity of the mitochondrial genome. Binds to mitochondrial DNA in a site-specific manner. This Oryza sativa subsp. indica (Rice) protein is Lon protease homolog, mitochondrial.